The chain runs to 288 residues: Thymidylate synthase (288 aa).

Arg21 contacts dUMP. His51 is a (6R)-5,10-methylene-5,6,7,8-tetrahydrofolate binding site. 150–151 is a binding site for dUMP; the sequence is RR. The active-site Nucleophile is the Cys170. DUMP-binding positions include 190–193, Asn201, and 231–233; these read RSGD and HIY. Asp193 provides a ligand contact to (6R)-5,10-methylene-5,6,7,8-tetrahydrofolate. Ala287 is a (6R)-5,10-methylene-5,6,7,8-tetrahydrofolate binding site.

It belongs to the thymidylate synthase family. Bacterial-type ThyA subfamily. Homodimer.

The protein localises to the cytoplasm. The catalysed reaction is dUMP + (6R)-5,10-methylene-5,6,7,8-tetrahydrofolate = 7,8-dihydrofolate + dTMP. It functions in the pathway pyrimidine metabolism; dTTP biosynthesis. Functionally, catalyzes the reductive methylation of 2'-deoxyuridine-5'-monophosphate (dUMP) to 2'-deoxythymidine-5'-monophosphate (dTMP) while utilizing 5,10-methylenetetrahydrofolate (mTHF) as the methyl donor and reductant in the reaction, yielding dihydrofolate (DHF) as a by-product. This enzymatic reaction provides an intracellular de novo source of dTMP, an essential precursor for DNA biosynthesis. The polypeptide is Thymidylate synthase (Mycoplasma mobile (strain ATCC 43663 / 163K / NCTC 11711) (Mesomycoplasma mobile)).